Here is a 443-residue protein sequence, read N- to C-terminus: Probable glutamate dehydrogenase (443 aa).

Lys86 is an active-site residue.

The protein belongs to the Glu/Leu/Phe/Val dehydrogenases family.

The catalysed reaction is L-glutamate + NAD(+) + H2O = 2-oxoglutarate + NH4(+) + NADH + H(+). The enzyme catalyses L-glutamate + NADP(+) + H2O = 2-oxoglutarate + NH4(+) + NADPH + H(+). This is Probable glutamate dehydrogenase from Sinorhizobium fredii (strain NBRC 101917 / NGR234).